The chain runs to 147 residues: Hemoglobin subunit gamma (147 aa).

Residues 3–147 form the Globin domain; sequence HFTAEEKAAI…VANALAYKYH (145 aa). 2 residues coordinate heme b: H64 and H93.

This sequence belongs to the globin family. Heterotetramer of two alpha chains and two gamma chains in fetal hemoglobin (Hb F). Red blood cells.

Functionally, gamma chains make up the fetal hemoglobin F, in combination with alpha chains. The polypeptide is Hemoglobin subunit gamma (HBG) (Elephas maximus (Indian elephant)).